The primary structure comprises 619 residues: MAATAAASVVRYAPEDHTLPKPWKGLIDDRTGYLYFWNPETNVTQYEKPTPSLPPKFSPAVSVSSSVQVQQTDAYAPPKDDDKYSRGSERVSRFSEGGRSGPPYSNGAANGVGDSAYGAASTRVPLPSSAPASELSPEAYSRRHEITVSGGQVPPPLMSFEATGFPPELLREVLSAGFSAPTPIQAQSWPIAMQGRDIVAIAKTGSGKTLGYLIPGFLHLQRIRNDSRMGPTILVLSPTRELATQIQEEAVKFGRSSRISCTCLYGGAPKGPQLRDLERGADIVVATPGRLNDILEMRRISLRQISYLVLDEADRMLDMGFEPQIRKIVKEIPTKRQTLMYTATWPKGVRKIAADLLVNPAQVNIGNVDELVANKSITQHIEVVAPMEKQRRLEQILRSQEPGSKVIIFCSTKRMCDQLTRNLTRQFGAAAIHGDKSQPERDNVLNQFRSGRTPVLVATDVAARGLDVKDIRAVVNYDFPNGVEDYVHRIGRTGRAGATGQAFTFFGDQDSKHASDLIKILEGANQRVPPQIREMATRGGGGMNKFSRWGPPSGGRGRGGDSGYGGRGSFASRDSRSSNGWGRERERSRSPERFNRAPPPSSTGSPPRSFHETMMMKHR.

At Ala2 the chain carries N-acetylalanine. The WW domain maps to 17-51 (HTLPKPWKGLIDDRTGYLYFWNPETNVTQYEKPTP). The tract at residues 47 to 139 (EKPTPSLPPK…APASELSPEA (93 aa)) is disordered. The span at 61-71 (VSVSSSVQVQQ) shows a compositional bias: low complexity. Residues 78–93 (PKDDDKYSRGSERVSR) are compositionally biased toward basic and acidic residues. Low complexity predominate over residues 125–139 (PLPSSAPASELSPEA). Ser136 carries the post-translational modification Phosphoserine. Positions 158–186 (MSFEATGFPPELLREVLSAGFSAPTPIQA) match the Q motif motif. The Helicase ATP-binding domain occupies 189-363 (WPIAMQGRDI…ADLLVNPAQV (175 aa)). Residue 202-209 (AKTGSGKT) coordinates ATP. The DEAD box signature appears at 311–314 (DEAD). The 145-residue stretch at 392–536 (RLEQILRSQE…RVPPQIREMA (145 aa)) folds into the Helicase C-terminal domain. The interval 528 to 619 (VPPQIREMAT…FHETMMMKHR (92 aa)) is disordered. The span at 552–568 (PSGGRGRGGDSGYGGRG) shows a compositional bias: gly residues. Composition is skewed to basic and acidic residues over residues 582-595 (GRER…ERFN) and 609-619 (SFHETMMMKHR).

Belongs to the DEAD box helicase family. DDX5/DBP2 subfamily. As to expression, ubiquitous. Preferentially expressed in flowers and roots.

It localises to the nucleus. It carries out the reaction ATP + H2O = ADP + phosphate + H(+). Functionally, ATP-dependent RNA helicase involved nonsense-mediated mRNA decay and ribosome biogenesis through rRNA processing. The protein is DEAD-box ATP-dependent RNA helicase 14 (RH14) of Arabidopsis thaliana (Mouse-ear cress).